The chain runs to 606 residues: MTPSVLERYQSAPQNPGVYLMKDKRGTIIYVGKALNLKKRLASYFARETGHDMKTGVLLKKVVDFDLIVTATEHEALILESTLIKKHSPRYNVILKDGKSYPCLRIDTSKPFPALEVVRKIGDDNAVYFGPYSSVQSVRSTIKQVNKIFKLRKCRDVQFANRTRPCLNYQINACLGACCNRVSRQEYARVVGDVILFLKGRAPDLINRLKFEMQTEADLEHFERAAQIRDTILAIQTTLERQVVVSTDRTDRDVIACAINGEKAVVTILFVRSGNLVGSRNYPFDTGLSGVPEILDAFVRHYYERSLFIPGQILIAEKIENHGLVQDLLIEKRGKRVSLVVPERGDKRRLVEMALVNAQKELEKNLSIQNEAWETLTALQTILGMSVYPRRIECFDNSNMAGTDPVSSMVVFVDGLACKSEYRKFIIRDAKENDDYACMTEVLTRRLSSTEAPLPDLLVVDGGKGQLSMAVAVLKSLGLENRFQVAGLAKKDAKLGEVYDKIYLPGRANPVNTRGALKALYLVQRLRDEAHRFAITFQRKRRSKRAGTSVLDAVPGIGKKRKQVLMTTYKGISRMGQATVEELASLPGMTLAAAQQVKSALALDKD.

The GIY-YIG domain occupies 14 to 93; the sequence is QNPGVYLMKD…IKKHSPRYNV (80 aa). The UVR domain maps to 203-238; sequence PDLINRLKFEMQTEADLEHFERAAQIRDTILAIQTT.

This sequence belongs to the UvrC family. As to quaternary structure, interacts with UvrB in an incision complex.

It is found in the cytoplasm. The UvrABC repair system catalyzes the recognition and processing of DNA lesions. UvrC both incises the 5' and 3' sides of the lesion. The N-terminal half is responsible for the 3' incision and the C-terminal half is responsible for the 5' incision. In Desulforapulum autotrophicum (strain ATCC 43914 / DSM 3382 / VKM B-1955 / HRM2) (Desulfobacterium autotrophicum), this protein is UvrABC system protein C.